We begin with the raw amino-acid sequence, 44 residues long: Putative protein PsbN (44 aa).

Residues Ile3–Ser23 traverse the membrane as a helical segment.

The protein belongs to the PsbN family.

It localises to the plastid. Its subcellular location is the chloroplast thylakoid membrane. Functionally, may play a role in photosystem I and II biogenesis. This chain is Putative protein PsbN, found in Euglena gracilis.